A 188-amino-acid polypeptide reads, in one-letter code: dCTP deaminase (188 aa).

DCTP is bound by residues Lys-111–Arg-116, Thr-135–Glu-137, Gln-156, Tyr-170, Lys-179, and Gln-180. The active-site Proton donor/acceptor is Glu-137.

This sequence belongs to the dCTP deaminase family. As to quaternary structure, homotrimer.

The enzyme catalyses dCTP + H2O + H(+) = dUTP + NH4(+). It participates in pyrimidine metabolism; dUMP biosynthesis; dUMP from dCTP (dUTP route): step 1/2. Catalyzes the deamination of dCTP to dUTP. The chain is dCTP deaminase from Rickettsia akari (strain Hartford).